Consider the following 265-residue polypeptide: Non-seed lectin (265 aa).

The segment at residues 1–21 is a signal peptide (or 23); that stretch reads MALYRTKELVSLVSIMFVLLA. Residues Asn-59 and Asn-127 are each glycosylated (N-linked (GlcNAc...) asparagine).

Belongs to the leguminous lectin family. In terms of assembly, monomer. Most highly expressed in the epidermal layer of developing shoot tips.

The chain is Non-seed lectin from Pisum sativum (Garden pea).